Here is an 82-residue protein sequence, read N- to C-terminus: ATP synthase subunit 9, mitochondrial (82 aa).

2 consecutive transmembrane segments (helical) span residues Ile-8–Phe-28 and Ser-45–Ala-67.

This sequence belongs to the ATPase C chain family. In terms of assembly, F-type ATPases have 2 components, CF(1) - the catalytic core - and CF(0) - the membrane proton channel. CF(1) has five subunits: alpha(3), beta(3), gamma(1), delta(1), epsilon(1). CF(0) has three main subunits: a, b and c.

The protein localises to the mitochondrion membrane. Its function is as follows. This protein is one of the chains of the nonenzymatic membrane component (F0) of mitochondrial ATPase. This is ATP synthase subunit 9, mitochondrial (ATP9) from Malus domestica (Apple).